Consider the following 291-residue polypeptide: Probable aquaporin PIP2-4 (291 aa).

M1 bears the N-acetylmethionine mark. Residues 1-22 (MAKDLDVNESGPPAARDYKDPP) are disordered. A2 bears the N-acetylalanine; in Probable aquaporin PIP2-4, N-terminally processed mark. At 2 to 39 (AKDLDVNESGPPAARDYKDPPPAPFFDMEELRKWPLYR) the chain is on the cytoplasmic side. K3 bears the N6,N6-dimethyllysine mark. A helical transmembrane segment spans residues 40–60 (AVIAEFVATLLFLYVSILTVI). Residues 61–74 (GYKAQTDATAGGVD) lie on the Extracellular side of the membrane. A helical transmembrane segment spans residues 75–95 (CGGVGILGIAWAFGGMIFVLV). Topologically, residues 96–125 (YCTAGISGGHINPAVTVGLFLARKVSLVRT) are cytoplasmic. The NPA 1 motif lies at 107–109 (NPA). A helical membrane pass occupies residues 126–146 (VLYIVAQCLGAICGCGFVKAF). The Extracellular segment spans residues 147–167 (QSSYYTRYGGGANELADGYNK). A helical transmembrane segment spans residues 168-188 (GTGLGAEIIGTFVLVYTVFSA). Over 189-201 (TDPKRNARDSHVP) the chain is Cytoplasmic. A helical membrane pass occupies residues 202–222 (VLAPLPIGFAVFMVHLATIPI). Over 223 to 249 (TGTGINPARSFGAAVIYNNEKAWDDQW) the chain is Extracellular. An NPA 2 motif is present at residues 228-230 (NPA). The chain crosses the membrane as a helical span at residues 250 to 270 (IFWVGPMIGAAAAAFYHQFIL). Over 271–291 (RAAAIKALGSFGSFGSFRSFA) the chain is Cytoplasmic. Phosphoserine occurs at positions 283, 286, and 289.

Belongs to the MIP/aquaporin (TC 1.A.8) family. PIP (TC 1.A.8.11) subfamily. Expressed in roots.

It localises to the cell membrane. Functionally, aquaporins facilitate the transport of water and small neutral solutes across cell membranes. This is Probable aquaporin PIP2-4 (PIP2-4) from Arabidopsis thaliana (Mouse-ear cress).